The sequence spans 86 residues: Exodeoxyribonuclease 7 small subunit (86 aa).

Belongs to the XseB family. As to quaternary structure, heterooligomer composed of large and small subunits.

The protein localises to the cytoplasm. The catalysed reaction is Exonucleolytic cleavage in either 5'- to 3'- or 3'- to 5'-direction to yield nucleoside 5'-phosphates.. Functionally, bidirectionally degrades single-stranded DNA into large acid-insoluble oligonucleotides, which are then degraded further into small acid-soluble oligonucleotides. The protein is Exodeoxyribonuclease 7 small subunit of Xanthomonas axonopodis pv. citri (strain 306).